Consider the following 56-residue polypeptide: Protein translocase subunit SecE (56 aa).

The helical transmembrane segment at 30-50 (VFWLVLFVSIFLGIVDYLMFL) threads the bilayer.

This sequence belongs to the SecE/SEC61-gamma family. In terms of assembly, component of the Sec protein translocase complex. Heterotrimer consisting of SecY, SecE and SecG subunits. The heterotrimers can form oligomers, although 1 heterotrimer is thought to be able to translocate proteins. Interacts with the ribosome. Interacts with SecDF, and other proteins may be involved. Interacts with SecA.

The protein resides in the cell inner membrane. In terms of biological role, essential subunit of the Sec protein translocation channel SecYEG. Clamps together the 2 halves of SecY. May contact the channel plug during translocation. The protein is Protein translocase subunit SecE of Borreliella burgdorferi (strain ATCC 35210 / DSM 4680 / CIP 102532 / B31) (Borrelia burgdorferi).